A 339-amino-acid polypeptide reads, in one-letter code: Cathepsin B (339 aa).

The first 17 residues, 1–17 (MWWLWASLCCLLALGDA), serve as a signal peptide directing secretion. The propeptide at 18 to 79 (RSRPSFHPLS…QRVMFTEDLK (62 aa)) is activation peptide. 6 disulfide bridges follow: C93–C122, C105–C150, C141–C207, C142–C146, C179–C211, and C187–C198. C108 is a catalytic residue. N-linked (GlcNAc...) asparagine glycosylation occurs at N192. K220 carries the post-translational modification N6-acetyllysine. Active-site residues include H278 and N298. Positions 334-339 (QYWEKI) are excised as a propeptide.

Belongs to the peptidase C1 family. As to quaternary structure, dimer of a heavy chain and a light chain cross-linked by a disulfide bond. Interacts with SRPX2. Directly interacts with SHKBP1.

Its subcellular location is the lysosome. It is found in the melanosome. It localises to the secreted. The protein resides in the extracellular space. The protein localises to the apical cell membrane. The enzyme catalyses Hydrolysis of proteins with broad specificity for peptide bonds. Preferentially cleaves -Arg-Arg-|-Xaa bonds in small molecule substrates (thus differing from cathepsin L). In addition to being an endopeptidase, shows peptidyl-dipeptidase activity, liberating C-terminal dipeptides.. Thiol protease which is believed to participate in intracellular degradation and turnover of proteins. Cleaves matrix extracellular phosphoglycoprotein MEPE. Involved in the solubilization of cross-linked TG/thyroglobulin in the thyroid follicle lumen. Has also been implicated in tumor invasion and metastasis. The sequence is that of Cathepsin B (CTSB) from Macaca fascicularis (Crab-eating macaque).